The following is a 693-amino-acid chain: Elongation factor G (693 aa).

The 276-residue stretch at 8–283 folds into the tr-type G domain; the sequence is NRCRNIGIMA…AVVDYLPSPL (276 aa). GTP-binding positions include 17-24, 81-85, and 135-138; these read AHIDAGKT, DTPGH, and NKMD.

It belongs to the TRAFAC class translation factor GTPase superfamily. Classic translation factor GTPase family. EF-G/EF-2 subfamily.

It localises to the cytoplasm. Its function is as follows. Catalyzes the GTP-dependent ribosomal translocation step during translation elongation. During this step, the ribosome changes from the pre-translocational (PRE) to the post-translocational (POST) state as the newly formed A-site-bound peptidyl-tRNA and P-site-bound deacylated tRNA move to the P and E sites, respectively. Catalyzes the coordinated movement of the two tRNA molecules, the mRNA and conformational changes in the ribosome. This chain is Elongation factor G, found in Acidobacterium capsulatum (strain ATCC 51196 / DSM 11244 / BCRC 80197 / JCM 7670 / NBRC 15755 / NCIMB 13165 / 161).